A 434-amino-acid polypeptide reads, in one-letter code: Glutamyl-tRNA reductase (434 aa).

Residues 49–52, serine 109, 114–116, and glutamine 120 contribute to the substrate site; these read TCNR and EPQ. Residue cysteine 50 is the Nucleophile of the active site. 189 to 194 serves as a coordination point for NADP(+); it reads GAGEMC.

This sequence belongs to the glutamyl-tRNA reductase family. In terms of assembly, homodimer.

The enzyme catalyses (S)-4-amino-5-oxopentanoate + tRNA(Glu) + NADP(+) = L-glutamyl-tRNA(Glu) + NADPH + H(+). Its pathway is porphyrin-containing compound metabolism; protoporphyrin-IX biosynthesis; 5-aminolevulinate from L-glutamyl-tRNA(Glu): step 1/2. Catalyzes the NADPH-dependent reduction of glutamyl-tRNA(Glu) to glutamate 1-semialdehyde (GSA). In Geotalea uraniireducens (strain Rf4) (Geobacter uraniireducens), this protein is Glutamyl-tRNA reductase.